Here is a 568-residue protein sequence, read N- to C-terminus: Kelch-like protein 12 (568 aa).

Positions 33 to 100 (CDVTLRVEQK…VYTETVHVTV (68 aa)) constitute a BTB domain. The region spanning 135-236 (CLGIRDFAET…LTPRYITDVI (102 aa)) is the BACK domain. 6 Kelch repeats span residues 282-329 (VLLV…SLHD), 331-379 (IYVI…TLGD), 380-426 (MIYV…VASG), 427-473 (IIYC…LLND), 475-520 (IYVV…VLRG), and 522-567 (LYAI…VLRE). Positions 405-568 (QWSMLGDMQT…DAGVCVLREK (164 aa)) are interaction with DVL3.

As to quaternary structure, component of the BCR(KLHL12) E3 ubiquitin ligase complex, at least composed of CUL3 and KLHL12 and RBX1. This complex interacts with DVL3 upon activation of the Wnt signaling pathway by WNT3A. Interacts with DRD4, KLHL2 and SEC31A. Interacts with PEF1 and PDCD6/ALG-2; interaction takes place in response to cytosolic calcium increase and leads to bridge together the BCR(KLHL12) complex and SEC31 (SEC31A or SEC31B). Ubiquitinated by the SCF(FBXL17) complex, leading to its degradation by the proteasome: ubiquitination by the SCF(FBXL17) complex takes place when aberrant BTB domain dimers are formed.

It is found in the cytoplasmic vesicle. It localises to the COPII-coated vesicle. The protein operates within protein modification; protein ubiquitination. Functionally, substrate-specific adapter of a BCR (BTB-CUL3-RBX1) E3 ubiquitin ligase complex that acts as a negative regulator of Wnt signaling pathway and ER-Golgi transport. The BCR(KLHL12) complex is involved in ER-Golgi transport by regulating the size of COPII coats, thereby playing a key role in collagen export, which is required for embryonic stem (ES) cells division: BCR(KLHL12) acts by mediating monoubiquitination of SEC31 (SEC31A or SEC31B). The BCR(KLHL12) complex is also involved in neural crest specification: in response to cytosolic calcium increase, interacts with the heterodimer formed with PEF1 and PDCD6/ALG-2, leading to bridge together the BCR(KLHL12) complex and SEC31 (SEC31A or SEC31B), promoting monoubiquitination of SEC31 and subsequent collagen export. As part of the BCR(KLHL12) complex, also acts as a negative regulator of the Wnt signaling pathway by mediating ubiquitination and subsequent proteolysis of DVL3. The BCR(KLHL12) complex also mediates polyubiquitination of DRD4 and PEF1, without leading to degradation of these proteins. The protein is Kelch-like protein 12 (Klhl12) of Rattus norvegicus (Rat).